The sequence spans 351 residues: DNA nickase (351 aa).

Histidine 241, glutamate 245, and histidine 303 together coordinate Fe cation.

Acts as a DNA nickase. This is DNA nickase from Nostoc sp. (strain PCC 7120 / SAG 25.82 / UTEX 2576).